The sequence spans 168 residues: Putative insulin-like growth factor 2 antisense gene protein (168 aa).

Disordered regions lie at residues 1-91 and 108-168; these read MSKR…ERSN and PLRR…RPGK. Basic residues-rich tracts occupy residues 59–70 and 159–168; these read AQRRRGSARRGA and RWRQPGRPGK.

The protein is Putative insulin-like growth factor 2 antisense gene protein (IGF2-AS) of Homo sapiens (Human).